Consider the following 178-residue polypeptide: ATP-dependent protease subunit HslV (178 aa).

Thr-7 is a catalytic residue. Gly-162, Cys-165, and Thr-168 together coordinate Na(+).

This sequence belongs to the peptidase T1B family. HslV subfamily. As to quaternary structure, a double ring-shaped homohexamer of HslV is capped on each side by a ring-shaped HslU homohexamer. The assembly of the HslU/HslV complex is dependent on binding of ATP.

The protein localises to the cytoplasm. The enzyme catalyses ATP-dependent cleavage of peptide bonds with broad specificity.. Its activity is regulated as follows. Allosterically activated by HslU binding. Functionally, protease subunit of a proteasome-like degradation complex believed to be a general protein degrading machinery. The polypeptide is ATP-dependent protease subunit HslV (Burkholderia cenocepacia (strain ATCC BAA-245 / DSM 16553 / LMG 16656 / NCTC 13227 / J2315 / CF5610) (Burkholderia cepacia (strain J2315))).